We begin with the raw amino-acid sequence, 220 residues long: UPF0643 protein PB2B2.08 (220 aa).

This sequence belongs to the UPF0643 family.

It localises to the cytoplasm. It is found in the nucleus. This chain is UPF0643 protein PB2B2.08, found in Schizosaccharomyces pombe (strain 972 / ATCC 24843) (Fission yeast).